The primary structure comprises 311 residues: MTRVKAAIIGSGNIGTDLMMKMIKYPQNMELAIVVGIDEKSEGLAMAREHGIATTHEGLEGLRRHPLYKEIGIAFDATSAYAHKVHDEALRADGIQVVDLTPAAIGPFTVPPVNMSQHLDQPNVNMVTCGGQATIPMVAAVARVSDKVHYAEIVASVSSRSAGPGTRANIDEFTRTTARAIEVVGGATRGKAIIILNPAEPPMIMRDTVFTLSEGADEDQIRRSVADMVAEVQKYVPGYRLKQEVQFERFGDNNKLKIPGQGEFTGIKSMIMLEVEGAGDYLPSYSGNLDIMTAAAKATGELLAARRMAAA.

Residue 11–14 coordinates NAD(+); the sequence is SGNI. The Acyl-thioester intermediate role is filled by Cys129. Residues 161–169 and Asn288 each bind NAD(+); that span reads SAGPGTRAN.

It belongs to the acetaldehyde dehydrogenase family.

It carries out the reaction acetaldehyde + NAD(+) + CoA = acetyl-CoA + NADH + H(+). This is Acetaldehyde dehydrogenase 1 from Novosphingobium aromaticivorans (strain ATCC 700278 / DSM 12444 / CCUG 56034 / CIP 105152 / NBRC 16084 / F199).